The chain runs to 673 residues: eEF1A lysine and N-terminal methyltransferase homolog (673 aa).

Belongs to the methyltransferase superfamily.

The catalysed reaction is L-lysyl-[protein] + S-adenosyl-L-methionine = N(6)-methyl-L-lysyl-[protein] + S-adenosyl-L-homocysteine + H(+). It carries out the reaction N(6)-methyl-L-lysyl-[protein] + S-adenosyl-L-methionine = N(6),N(6)-dimethyl-L-lysyl-[protein] + S-adenosyl-L-homocysteine + H(+). The enzyme catalyses N-terminal glycyl-L-lysyl-L-glutamyl-[protein] + 3 S-adenosyl-L-methionine = N-terminal N,N,N-trimethyl-glycyl-L-lysyl-L-glutamyl-[protein] + 3 S-adenosyl-L-homocysteine + 3 H(+). Dual methyltransferase. It catalyzes N-terminal methylation of target proteins via its C-terminus. It catalyzes dimethylation on lysine residues of target proteins via its N-terminus. This Drosophila pseudoobscura pseudoobscura (Fruit fly) protein is eEF1A lysine and N-terminal methyltransferase homolog.